A 919-amino-acid polypeptide reads, in one-letter code: MSKKRVYELARELGIDNKELISRLEKLGIAVKSHSGTLEDSEVDRVTKEFHARGSREMVEQRIKTTVIRRRAVRVPEKEAVLEKVPVEMEKEMGKALPEEVPEKIAPSRETPPAKVVKPRPVVPEKKIPAAGEKPLAPPEKPAEPVAPPIAEILKQEKIQPPEKFAEEPLKKPAVIEPEKAAAAPKAVPGEAKPLPRTERVQEQGKPVPGRKEGRTPVSRRPAETRFPAKPAPQPEMARKQVVAAAPGRAVPQEKGAPKTEAEKPRKKIKLPDETRKGEQIPARKKTVLKKGPEKTDFRGTLEEEIIERAVRPPRWKEEKKAAPVKMKKTEITVPKAIKRRIRVGEAITVGDLAKKMGVKAGEVINKLMRMGLMATINQSIDFDAASLIATEFEYQVEPAGMEYDESMFKVESSVENLKPRAPVVTIMGHVDHGKTSLLDAIRKTRVTEGEAGGITQAIGAYRVNLKGREIVFLDTPGHEAFTAMRARGAQVTDIVVLVVAADDGVMDQTVEAINHSKIAGVPIIVAINKIDKPEADPGRIKQALTEYELVPEEWGGDTIFSEVSAKQKIGIEELLELILLQADVLELKADPDRPARGVVIEARLDRGRGPVATVLIQEGTLHEGDAFVSKTEYGRVRAMNDDQGRRIKEAGPATPVEVIGFSRVPQASAEFNAVEDEKKARSIGDYWMRKEREKELSATSKITLEQLYEKMKEGVKELNVILRADVQGSLEALSDALTKLSTDDIKLKVIHGSTGAITETDVMLASASNAIIIGFNVRPDARVAEIAEAEGVDIKLYDIIYNVIADVRAAMEGLLEPEYREVVLGRAEVRDLFRVPKVGTVAGSFVIDGKVTRKANVKLVRDGVVVFDGKIGSLKRFKDDVKEVLSGFECGIGIEGFNDLRMGDMIEAYINEKVERKL.

A compositionally biased stretch (basic and acidic residues) spans 93 to 107 (MGKALPEEVPEKIAP). 2 disordered regions span residues 93-145 (MGKA…PAEP) and 158-279 (KIQP…RKGE). Pro residues predominate over residues 136 to 145 (LAPPEKPAEP). A compositionally biased stretch (basic and acidic residues) spans 158-171 (KIQPPEKFAEEPLK). Residues 172-193 (KPAVIEPEKAAAAPKAVPGEAK) are compositionally biased toward low complexity. 2 stretches are compositionally biased toward basic and acidic residues: residues 194–203 (PLPRTERVQE) and 256–279 (GAPK…RKGE). Positions 420–589 (PRAPVVTIMG…LLQADVLELK (170 aa)) constitute a tr-type G domain. Residues 429–436 (GHVDHGKT) form a G1 region. 429 to 436 (GHVDHGKT) serves as a coordination point for GTP. The interval 454–458 (GITQA) is G2. Residues 475-478 (DTPG) are G3. GTP contacts are provided by residues 475–479 (DTPGH) and 529–532 (NKID). A G4 region spans residues 529–532 (NKID). The segment at 565 to 567 (SAK) is G5.

This sequence belongs to the TRAFAC class translation factor GTPase superfamily. Classic translation factor GTPase family. IF-2 subfamily.

It localises to the cytoplasm. In terms of biological role, one of the essential components for the initiation of protein synthesis. Protects formylmethionyl-tRNA from spontaneous hydrolysis and promotes its binding to the 30S ribosomal subunits. Also involved in the hydrolysis of GTP during the formation of the 70S ribosomal complex. In Syntrophus aciditrophicus (strain SB), this protein is Translation initiation factor IF-2.